The primary structure comprises 402 residues: Pyridinium-3,5-bisthiocarboxylic acid mononucleotide nickel insertion protein (402 aa).

It belongs to the LarC family.

The enzyme catalyses Ni(II)-pyridinium-3,5-bisthiocarboxylate mononucleotide = pyridinium-3,5-bisthiocarboxylate mononucleotide + Ni(2+). Involved in the biosynthesis of a nickel-pincer cofactor ((SCS)Ni(II) pincer complex). Binds Ni(2+), and functions in nickel delivery to pyridinium-3,5-bisthiocarboxylic acid mononucleotide (P2TMN), to form the mature cofactor. Is thus probably required for the activation of nickel-pincer cofactor-dependent enzymes. This chain is Pyridinium-3,5-bisthiocarboxylic acid mononucleotide nickel insertion protein, found in Desulfitobacterium hafniense (strain Y51).